The following is a 107-amino-acid chain: Chlorobenzene dioxygenase, ferredoxin component (107 aa).

Residues 4 to 99 (TYIMRQSDLP…IKVEGGDVHV (96 aa)) form the Rieske domain. [2Fe-2S] cluster contacts are provided by Cys43, His45, Cys62, and His65.

This sequence belongs to the bacterial ring-hydroxylating dioxygenase ferredoxin component family. This dioxygenase system consists of four proteins: the two subunits of the oxygenase component (TecA1 and TecA2), a ferredoxin (TecA3) and a ferredoxin reductase (TecA4). The cofactor is [2Fe-2S] cluster.

Its pathway is aromatic compound metabolism. Part of the chlorobenzene dioxygenase system that catalyzes the dihydroxylation of a range of aromatic compounds, including chlorinated benzenes and toluenes, and dinuclear aromatics such as biphenyl and dibenzo-p-dioxin. This chain is Chlorobenzene dioxygenase, ferredoxin component, found in Cupriavidus sp. (strain PS12).